Here is a 91-residue protein sequence, read N- to C-terminus: Small ribosomal subunit protein uS15 (91 aa).

This sequence belongs to the universal ribosomal protein uS15 family. In terms of assembly, part of the 30S ribosomal subunit. Forms a bridge to the 50S subunit in the 70S ribosome, contacting the 23S rRNA.

In terms of biological role, one of the primary rRNA binding proteins, it binds directly to 16S rRNA where it helps nucleate assembly of the platform of the 30S subunit by binding and bridging several RNA helices of the 16S rRNA. Forms an intersubunit bridge (bridge B4) with the 23S rRNA of the 50S subunit in the ribosome. This chain is Small ribosomal subunit protein uS15, found in Nautilia profundicola (strain ATCC BAA-1463 / DSM 18972 / AmH).